The sequence spans 427 residues: Glucose-1-phosphate adenylyltransferase (427 aa).

Alpha-D-glucose 1-phosphate is bound by residues tyrosine 121, glycine 186, 201 to 202, and serine 219; that span reads EK.

It belongs to the bacterial/plant glucose-1-phosphate adenylyltransferase family. As to quaternary structure, homotetramer.

It carries out the reaction alpha-D-glucose 1-phosphate + ATP + H(+) = ADP-alpha-D-glucose + diphosphate. It participates in glycan biosynthesis; glycogen biosynthesis. In terms of biological role, involved in the biosynthesis of ADP-glucose, a building block required for the elongation reactions to produce glycogen. Catalyzes the reaction between ATP and alpha-D-glucose 1-phosphate (G1P) to produce pyrophosphate and ADP-Glc. This is Glucose-1-phosphate adenylyltransferase from Corynebacterium diphtheriae (strain ATCC 700971 / NCTC 13129 / Biotype gravis).